A 123-amino-acid polypeptide reads, in one-letter code: Defensin beta 118 (123 aa).

Positions 1–19 (MKLLLLALPILVLLPQVIP) are cleaved as a signal peptide. 3 disulfides stabilise this stretch: cysteine 27/cysteine 54, cysteine 34/cysteine 48, and cysteine 38/cysteine 55. Positions 65–123 (LPTTSPTPLSDSTPGIIDNILTIRFTTDYFEISSKKDMVEESEAGQGTQTSPPNVHHTS) are excised as a propeptide. The segment at 100–123 (KDMVEESEAGQGTQTSPPNVHHTS) is disordered. The span at 109 to 123 (GQGTQTSPPNVHHTS) shows a compositional bias: polar residues.

This sequence belongs to the beta-defensin family. In terms of processing, the three-dimensional structure formed by the three intramolecular disulfide bridges is indispensable for antimicrobial activity. In terms of tissue distribution, high-level and epididymis-specific expression. Most abundant in the epithelium of the caput and is also present in the lumen and bound to sperm.

Its subcellular location is the secreted. Functionally, host defense peptide that exhibits antimicrobial activity against both Gram-negative bacteria, such as E.coli and S.typhimurium, and Gram-positive bacteria, such as S.aureus and B.subtilis. Inhibits cell adhesion of E.coli on intestinal epithelial enterocytes. Causes rapid permeabilization of both the outer and inner membrane of E.coli, leading to morphological alterations on the bacterial surface. Binds to bacterial lipopolysaccharides (LPS) with high affinity, and may thereby be involved in immunoregulation through LPS neutralization. May contribute to epididymal innate immunity and protect the sperm against attack by microorganisms. This Macaca mulatta (Rhesus macaque) protein is Defensin beta 118 (DEFB118).